Reading from the N-terminus, the 379-residue chain is Alcohol dehydrogenase class-P (379 aa).

The residue at position 2 (S2) is an N-acetylserine. C47 is a Zn(2+) binding site. An an alcohol-binding site is contributed by T49. Position 49 (T49) interacts with NAD(+). Zn(2+) contacts are provided by D50, H69, E70, C99, C102, C105, C113, and C177. Position 69 (H69) interacts with an alcohol. NAD(+) is bound by residues V206 and D226. The residue at position 229 (S229) is a Phosphoserine. The NAD(+) site is built by R231, T272, V295, V297, T320, F322, and R372.

The protein belongs to the zinc-containing alcohol dehydrogenase family. Class-P subfamily. As to quaternary structure, homodimer. Zn(2+) is required as a cofactor. Glutathionylated. Root specific. Also detected in etiolated seedlings and leaves in cold conditions.

It is found in the cytoplasm. The enzyme catalyses a primary alcohol + NAD(+) = an aldehyde + NADH + H(+). It catalyses the reaction a secondary alcohol + NAD(+) = a ketone + NADH + H(+). The catalysed reaction is ethanol + NAD(+) = acetaldehyde + NADH + H(+). With respect to regulation, alcohol dehydrogenase activity show inverse correlation with the decreasing availability of oxygen. Slightly repressed by thiol-modifying agents N-ethylmaleimide (NEM) and 5,5-dithio-bis-(2-nitrobenzoic acid) (DTNB), as well as by methyl methanethiosulfonate (MMTS) in a dose-dependent manner. Inhibited by hydrogen peroxide H(2)O(2). Alcohol dehydrogenase catalyzing the reduction of toxic aldehydes to the corresponding alcohols. Mostly active on ethanol (EtOH), but exhibits broad substrate selectivity for primary and secondary alcohols (e.g. cinnamyl alcohol, octanol, geraniol, butanol, propyl alcohol, pentanol, isopentanol, ethylene glycol, isopropanol, methanol and tertiary butyl alcohol). Also catalyzes the reverse reaction to convert allyl alcohol to highly toxic acryl-aldehyde. Required for survival and acclimation in hypoxic conditions, especially in roots. Not able to catalyze NADH-dependent degradation of S-nitrosoglutathione (GSNO). This Arabidopsis thaliana (Mouse-ear cress) protein is Alcohol dehydrogenase class-P.